The chain runs to 233 residues: Uracil-DNA glycosylase (233 aa).

D70 functions as the Proton acceptor in the catalytic mechanism.

Belongs to the uracil-DNA glycosylase (UDG) superfamily. UNG family.

It localises to the cytoplasm. It carries out the reaction Hydrolyzes single-stranded DNA or mismatched double-stranded DNA and polynucleotides, releasing free uracil.. Functionally, excises uracil residues from the DNA which can arise as a result of misincorporation of dUMP residues by DNA polymerase or due to deamination of cytosine. This Helicobacter acinonychis (strain Sheeba) protein is Uracil-DNA glycosylase.